The sequence spans 222 residues: tRNA (guanine-N(1)-)-methyltransferase (222 aa).

S-adenosyl-L-methionine contacts are provided by residues G111 and 131-136 (LGNYVI).

Belongs to the RNA methyltransferase TrmD family. As to quaternary structure, homodimer.

It localises to the cytoplasm. It catalyses the reaction guanosine(37) in tRNA + S-adenosyl-L-methionine = N(1)-methylguanosine(37) in tRNA + S-adenosyl-L-homocysteine + H(+). Its function is as follows. Specifically methylates guanosine-37 in various tRNAs. This Leptospira borgpetersenii serovar Hardjo-bovis (strain JB197) protein is tRNA (guanine-N(1)-)-methyltransferase.